We begin with the raw amino-acid sequence, 156 residues long: Small ribosomal subunit protein uS7 (156 aa).

It belongs to the universal ribosomal protein uS7 family. In terms of assembly, part of the 30S ribosomal subunit. Contacts proteins S9 and S11.

One of the primary rRNA binding proteins, it binds directly to 16S rRNA where it nucleates assembly of the head domain of the 30S subunit. Is located at the subunit interface close to the decoding center, probably blocks exit of the E-site tRNA. This Staphylococcus aureus (strain USA300) protein is Small ribosomal subunit protein uS7.